The sequence spans 667 residues: Cysteine-rich receptor-like protein kinase 11 (667 aa).

The signal sequence occupies residues 1–24 (MKQRSLFSVLCFFFISFGVASVSA). Gnk2-homologous domains follow at residues 25–129 (QTCT…NTSF) and 135–248 (LNPR…LYTY). The Extracellular portion of the chain corresponds to 25-292 (QTCTTDKGTF…SKGISAGVVV (268 aa)). 7 N-linked (GlcNAc...) asparagine glycosylation sites follow: Asn-37, Asn-54, Asn-64, Asn-106, Asn-126, Asn-150, and Asn-254. The segment covering 259–268 (SPPPEPPVTV) has biased composition (pro residues). Residues 259 to 282 (SPPPEPPVTVPQPAGDQDNPTNND) are disordered. Asn-281 carries N-linked (GlcNAc...) asparagine glycosylation. Residues 293–313 (AITVPTVIAILILLVLGFVLF) traverse the membrane as a helical segment. Residues 314–667 (RRRKSYQRTK…YTSKSSSFSS (354 aa)) lie on the Cytoplasmic side of the membrane. One can recognise a Protein kinase domain in the interval 350-629 (FSTSNKLGEG…IILMLTSNTI (280 aa)). ATP-binding positions include 356 to 364 (LGEGGFGAV) and Lys-378. Phosphotyrosine is present on Tyr-423. Asp-475 acts as the Proton acceptor in catalysis. Ser-479 bears the Phosphoserine mark. Thr-515 is modified (phosphothreonine). A Phosphotyrosine modification is found at Tyr-523.

The protein belongs to the protein kinase superfamily. Ser/Thr protein kinase family. CRK subfamily. In terms of tissue distribution, detected in root, stem, leaf and flower.

Its subcellular location is the membrane. The catalysed reaction is L-seryl-[protein] + ATP = O-phospho-L-seryl-[protein] + ADP + H(+). The enzyme catalyses L-threonyl-[protein] + ATP = O-phospho-L-threonyl-[protein] + ADP + H(+). The chain is Cysteine-rich receptor-like protein kinase 11 (CRK11) from Arabidopsis thaliana (Mouse-ear cress).